The primary structure comprises 82 residues: Cytochrome b-c1 complex subunit 8 (82 aa).

Residues 1-39 (MGREFGNLTRIRHVISYSLSPFEQRAFPHYFSKGIPNVL) are Mitochondrial matrix-facing. The residue at position 16 (Ser-16) is a Phosphoserine. Residue Lys-33 is modified to N6-acetyllysine; alternate. Lys-33 is subject to N6-succinyllysine; alternate. Residues 40-68 (RRTRERILRVAPPFVLFYLIYTWGNQEFA) form a helical membrane-spanning segment. Over 69-82 (QSKRKNPAKYENDK) the chain is Mitochondrial intermembrane.

Belongs to the UQCRQ/QCR8 family. In terms of assembly, component of the ubiquinol-cytochrome c oxidoreductase (cytochrome b-c1 complex, complex III, CIII), a multisubunit enzyme composed of 11 subunits. The complex is composed of 3 respiratory subunits cytochrome b, cytochrome c1 and Rieske protein UQCRFS1, 2 core protein subunits UQCRC1/QCR1 and UQCRC2/QCR2, and 6 low-molecular weight protein subunits UQCRH/QCR6, UQCRB/QCR7, UQCRQ/QCR8, UQCR10/QCR9, UQCR11/QCR10 and subunit 9, the cleavage product of Rieske protein UQCRFS1. The complex exists as an obligatory dimer and forms supercomplexes (SCs) in the inner mitochondrial membrane with NADH-ubiquinone oxidoreductase (complex I, CI) and cytochrome c oxidase (complex IV, CIV), resulting in different assemblies (supercomplex SCI(1)III(2)IV(1) and megacomplex MCI(2)III(2)IV(2)). Interacts with UQCC6.

The protein resides in the mitochondrion inner membrane. In terms of biological role, component of the ubiquinol-cytochrome c oxidoreductase, a multisubunit transmembrane complex that is part of the mitochondrial electron transport chain which drives oxidative phosphorylation. The respiratory chain contains 3 multisubunit complexes succinate dehydrogenase (complex II, CII), ubiquinol-cytochrome c oxidoreductase (cytochrome b-c1 complex, complex III, CIII) and cytochrome c oxidase (complex IV, CIV), that cooperate to transfer electrons derived from NADH and succinate to molecular oxygen, creating an electrochemical gradient over the inner membrane that drives transmembrane transport and the ATP synthase. The cytochrome b-c1 complex catalyzes electron transfer from ubiquinol to cytochrome c, linking this redox reaction to translocation of protons across the mitochondrial inner membrane, with protons being carried across the membrane as hydrogens on the quinol. In the process called Q cycle, 2 protons are consumed from the matrix, 4 protons are released into the intermembrane space and 2 electrons are passed to cytochrome c. This Rattus norvegicus (Rat) protein is Cytochrome b-c1 complex subunit 8 (Uqcrq).